The sequence spans 205 residues: MVNYPHKVSKKINRTSPISSQRVNFANRGMSFEAAINDSNQYYLAHDIAVIHKKPTPVQIVKVDYPKRSRAKIVEAYFRQASTTDYSGVFKRHYIDFEAKETRQKASMPMKNFHAHQIEHMKQVVKQGGICFVLLHFSTLKETYLLPATHLIEFYQVDMGSKSMPLTFIRQYGFEIQMGRFPSIPYLEIVEKNLLGGESFENYNN.

Mg(2+)-binding residues include Thr-83, Asp-85, Glu-98, and Gln-117.

It belongs to the RecU family. Requires Mg(2+) as cofactor.

It is found in the cytoplasm. The catalysed reaction is Endonucleolytic cleavage at a junction such as a reciprocal single-stranded crossover between two homologous DNA duplexes (Holliday junction).. Functionally, endonuclease that resolves Holliday junction intermediates in genetic recombination. Cleaves mobile four-strand junctions by introducing symmetrical nicks in paired strands. Promotes annealing of linear ssDNA with homologous dsDNA. Required for DNA repair, homologous recombination and chromosome segregation. This chain is Holliday junction resolvase RecU, found in Streptococcus suis (strain 98HAH33).